The chain runs to 126 residues: Large ribosomal subunit protein uL24 (126 aa).

The disordered stretch occupies residues 1-23; it reads MKFSRDVTSSRRKQRKAHFGAPS.

It belongs to the universal ribosomal protein uL24 family. In terms of assembly, component of the large ribosomal subunit (LSU). Mature yeast ribosomes consist of a small (40S) and a large (60S) subunit. The 40S small subunit contains 1 molecule of ribosomal RNA (18S rRNA) and at least 33 different proteins. The large 60S subunit contains 3 rRNA molecules (25S, 5.8S and 5S rRNA) and at least 46 different proteins.

Its subcellular location is the cytoplasm. The protein resides in the nucleus. It localises to the nucleolus. Component of the ribosome, a large ribonucleoprotein complex responsible for the synthesis of proteins in the cell. The small ribosomal subunit (SSU) binds messenger RNAs (mRNAs) and translates the encoded message by selecting cognate aminoacyl-transfer RNA (tRNA) molecules. The large subunit (LSU) contains the ribosomal catalytic site termed the peptidyl transferase center (PTC), which catalyzes the formation of peptide bonds, thereby polymerizing the amino acids delivered by tRNAs into a polypeptide chain. The nascent polypeptides leave the ribosome through a tunnel in the LSU and interact with protein factors that function in enzymatic processing, targeting, and the membrane insertion of nascent chains at the exit of the ribosomal tunnel. The protein is Large ribosomal subunit protein uL24 (rpl26) of Schizosaccharomyces pombe (strain 972 / ATCC 24843) (Fission yeast).